The primary structure comprises 667 residues: Tripartite terminase subunit 3 (667 aa).

The short motif at 208–215 is the Walker A motif element; the sequence is VPRRHGKT. The short motif at 301–306 is the Walker B motif element; sequence LLIVDE. The For ATPase activity role is filled by Glu306. Catalysis depends on for nuclease activity residues Asp459, Glu530, and Asp644.

It belongs to the herpesviridae TRM3 protein family. Interacts with the terminase subunits TRM1 and TRM2. Interacts with portal protein.

It localises to the host nucleus. Functionally, component of the molecular motor that translocates viral genomic DNA in empty capsid during DNA packaging. Forms a tripartite terminase complex together with TRM1 and TRM2 in the host cytoplasm. Once the complex reaches the host nucleus, it interacts with the capsid portal vertex. This portal forms a ring in which genomic DNA is translocated into the capsid. TRM3 carries an RNase H-like nuclease activity that plays an important role for the cleavage of concatemeric viral DNA into unit length genomes. This Human herpesvirus 6A (strain Uganda-1102) (HHV-6 variant A) protein is Tripartite terminase subunit 3.